The chain runs to 588 residues: Sulfite reductase [NADPH] hemoprotein beta-component (588 aa).

4 residues coordinate [4Fe-4S] cluster: C443, C449, C488, and C492. C492 contributes to the siroheme binding site.

It belongs to the nitrite and sulfite reductase 4Fe-4S domain family. Alpha(8)-beta(8). The alpha component is a flavoprotein, the beta component is a hemoprotein. The cofactor is siroheme. [4Fe-4S] cluster is required as a cofactor.

It carries out the reaction hydrogen sulfide + 3 NADP(+) + 3 H2O = sulfite + 3 NADPH + 4 H(+). The protein operates within sulfur metabolism; hydrogen sulfide biosynthesis; hydrogen sulfide from sulfite (NADPH route): step 1/1. Component of the sulfite reductase complex that catalyzes the 6-electron reduction of sulfite to sulfide. This is one of several activities required for the biosynthesis of L-cysteine from sulfate. The protein is Sulfite reductase [NADPH] hemoprotein beta-component of Actinobacillus succinogenes (strain ATCC 55618 / DSM 22257 / CCUG 43843 / 130Z).